Here is a 342-residue protein sequence, read N- to C-terminus: Phosphate acyltransferase (342 aa).

Belongs to the PlsX family. Homodimer. Probably interacts with PlsY.

The protein resides in the cytoplasm. It catalyses the reaction a fatty acyl-[ACP] + phosphate = an acyl phosphate + holo-[ACP]. The protein operates within lipid metabolism; phospholipid metabolism. In terms of biological role, catalyzes the reversible formation of acyl-phosphate (acyl-PO(4)) from acyl-[acyl-carrier-protein] (acyl-ACP). This enzyme utilizes acyl-ACP as fatty acyl donor, but not acyl-CoA. The polypeptide is Phosphate acyltransferase (Legionella pneumophila (strain Corby)).